We begin with the raw amino-acid sequence, 163 residues long: Putative pre-16S rRNA nuclease (163 aa).

The protein belongs to the YqgF nuclease family.

The protein localises to the cytoplasm. In terms of biological role, could be a nuclease involved in processing of the 5'-end of pre-16S rRNA. The protein is Putative pre-16S rRNA nuclease of Nitrobacter winogradskyi (strain ATCC 25391 / DSM 10237 / CIP 104748 / NCIMB 11846 / Nb-255).